Reading from the N-terminus, the 436-residue chain is GTPase Der (436 aa).

EngA-type G domains are found at residues 4–167 and 175–351; these read PTVA…PVEE and IRFS…ESQN. GTP contacts are provided by residues 10 to 17, 57 to 61, 119 to 122, 181 to 188, 229 to 233, and 294 to 297; these read GRPNVGKS, DTGGI, NKVD, DTAGM, and NKWD. The KH-like domain maps to 352–436; the sequence is KRIPSAVLND…PIHLIARKRK (85 aa).

It belongs to the TRAFAC class TrmE-Era-EngA-EngB-Septin-like GTPase superfamily. EngA (Der) GTPase family. Associates with the 50S ribosomal subunit.

Functionally, GTPase that plays an essential role in the late steps of ribosome biogenesis. The sequence is that of GTPase Der from Streptococcus uberis (strain ATCC BAA-854 / 0140J).